A 174-amino-acid polypeptide reads, in one-letter code: RNA pyrophosphohydrolase (174 aa).

The Nudix hydrolase domain occupies 6–149 (GFRANVGIII…KRDVYRKVMK (144 aa)). The Nudix box motif lies at 38 to 59 (GGVDDGETAEEAMYRELYEEVG).

Belongs to the Nudix hydrolase family. RppH subfamily. Requires a divalent metal cation as cofactor.

Accelerates the degradation of transcripts by removing pyrophosphate from the 5'-end of triphosphorylated RNA, leading to a more labile monophosphorylated state that can stimulate subsequent ribonuclease cleavage. The chain is RNA pyrophosphohydrolase from Shewanella sp. (strain MR-7).